The sequence spans 342 residues: Signal-regulatory protein beta-2 (342 aa).

Positions 1-32 (MCSTMSAPTCLAHLPPCFLLLALVLVPSDASG) are cleaved as a signal peptide. Ig-like V-type domains follow at residues 33–143 (QSSR…KSDE) and 157–258 (PDLW…SGQG). At 33–287 (QSSRNDWQVL…EPATEMSPTG (255 aa)) the chain is on the extracellular side. Residues C60 and C127 are joined by a disulfide bond. N116, N179, and N231 each carry an N-linked (GlcNAc...) asparagine glycan. Residues C180 and C242 are joined by a disulfide bond. Residues 288-308 (LLVVFAPVVLGLKAITLAALL) traverse the membrane as a helical segment. Residues 309-342 (LALATSRRSPGQEDVKTTGPAGAMNTLAWSKGQE) lie on the Cytoplasmic side of the membrane. The disordered stretch occupies residues 317 to 342 (SPGQEDVKTTGPAGAMNTLAWSKGQE).

It localises to the membrane. This Homo sapiens (Human) protein is Signal-regulatory protein beta-2 (SIRPB2).